A 425-amino-acid chain; its full sequence is Formyl-CoA:oxalate CoA-transferase (425 aa).

Residues 17-18 (QS), Arg38, 72-75 (LDTK), 96-98 (NFG), Arg104, and 136-139 (KVYE) each bind CoA. Asp168 serves as the catalytic Nucleophile. Substrate is bound at residue 247 to 249 (GGQ).

This sequence belongs to the CoA-transferase III family. Frc subfamily. As to quaternary structure, homodimer.

It carries out the reaction formyl-CoA + oxalate = oxalyl-CoA + formate. It participates in metabolic intermediate degradation; oxalate degradation; CO(2) and formate from oxalate: step 1/2. Functionally, involved in the catabolism of oxalate and in the adapatation to low pH via the induction of the oxalate-dependent acid tolerance response (ATR). Catalyzes the transfer of the CoA moiety from formyl-CoA to oxalate. The polypeptide is Formyl-CoA:oxalate CoA-transferase (Rhodopseudomonas palustris (strain TIE-1)).